We begin with the raw amino-acid sequence, 506 residues long: Pentatricopeptide repeat-containing protein At5g18475 (506 aa).

Residues 28–48 (SEKKKKPSPPPESSISPVETN) are disordered. PPR repeat units lie at residues 88-122 (NNAT…TCRF), 123-158 (QESL…RVKP), 159-194 (SLNA…GLQP), 195-229 (NTCI…GISY), 231-266 (NSIT…GISP), 267-301 (DPVT…GCNP), 302-336 (NVYN…GLKL), 337-371 (DTVG…RCRA), 372-406 (DTLT…GVHL), 407-441 (NKGS…GIWP), 442-476 (HHAT…GLIP), and 477-506 (GPKS…SLVS).

This sequence belongs to the PPR family. P subfamily.

This Arabidopsis thaliana (Mouse-ear cress) protein is Pentatricopeptide repeat-containing protein At5g18475.